We begin with the raw amino-acid sequence, 128 residues long: Small ribosomal subunit protein uS11 (128 aa).

Belongs to the universal ribosomal protein uS11 family. As to quaternary structure, part of the 30S ribosomal subunit. Interacts with proteins S7 and S18. Binds to IF-3.

Functionally, located on the platform of the 30S subunit, it bridges several disparate RNA helices of the 16S rRNA. Forms part of the Shine-Dalgarno cleft in the 70S ribosome. This chain is Small ribosomal subunit protein uS11, found in Desulfatibacillum aliphaticivorans.